Here is a 508-residue protein sequence, read N- to C-terminus: Glycerol kinase (508 aa).

T14 contributes to the ADP binding site. 3 residues coordinate ATP: T14, T15, and S16. T14 serves as a coordination point for sn-glycerol 3-phosphate. Residue R18 coordinates ADP. Residues R84, E85, and Y136 each contribute to the sn-glycerol 3-phosphate site. R84, E85, and Y136 together coordinate glycerol. H232 is modified (phosphohistidine; by HPr). D246 is a binding site for sn-glycerol 3-phosphate. Residues D246 and Q247 each contribute to the glycerol site. Residues T268 and G311 each coordinate ADP. Positions 268, 311, 315, and 412 each coordinate ATP. 2 residues coordinate ADP: G412 and N416.

It belongs to the FGGY kinase family. Homotetramer and homodimer (in equilibrium). The phosphoenolpyruvate-dependent sugar phosphotransferase system (PTS), including enzyme I, and histidine-containing protein (HPr) are required for the phosphorylation, which leads to the activation of the enzyme.

It catalyses the reaction glycerol + ATP = sn-glycerol 3-phosphate + ADP + H(+). The protein operates within polyol metabolism; glycerol degradation via glycerol kinase pathway; sn-glycerol 3-phosphate from glycerol: step 1/1. Activated by phosphorylation and inhibited by fructose 1,6-bisphosphate (FBP). Functionally, key enzyme in the regulation of glycerol uptake and metabolism. Catalyzes the phosphorylation of glycerol to yield sn-glycerol 3-phosphate. In Streptococcus pyogenes serotype M18 (strain MGAS8232), this protein is Glycerol kinase.